The chain runs to 276 residues: Light-independent protochlorophyllide reductase iron-sulfur ATP-binding protein (276 aa).

ATP-binding positions include 12-17 and Lys-41; that span reads GIGKST. Residue Ser-16 coordinates Mg(2+). Cys-97 and Cys-131 together coordinate [4Fe-4S] cluster. Residue 182–183 participates in ATP binding; the sequence is NR.

It belongs to the NifH/BchL/ChlL family. Homodimer. Protochlorophyllide reductase is composed of three subunits; BchL, BchN and BchB. It depends on [4Fe-4S] cluster as a cofactor.

The catalysed reaction is chlorophyllide a + oxidized 2[4Fe-4S]-[ferredoxin] + 2 ADP + 2 phosphate = protochlorophyllide a + reduced 2[4Fe-4S]-[ferredoxin] + 2 ATP + 2 H2O. Its pathway is porphyrin-containing compound metabolism; bacteriochlorophyll biosynthesis (light-independent). In terms of biological role, component of the dark-operative protochlorophyllide reductase (DPOR) that uses Mg-ATP and reduced ferredoxin to reduce ring D of protochlorophyllide (Pchlide) to form chlorophyllide a (Chlide). This reaction is light-independent. The L component serves as a unique electron donor to the NB-component of the complex, and binds Mg-ATP. This Chlorobium chlorochromatii (strain CaD3) protein is Light-independent protochlorophyllide reductase iron-sulfur ATP-binding protein.